The chain runs to 426 residues: D-cysteine desulfhydrase 1, mitochondrial (426 aa).

The N-terminal 63 residues, 1 to 63, are a transit peptide targeting the mitochondrion; the sequence is MARGAHQAPG…IGSFLSKRPY (63 aa). Residue Lys119 is modified to N6-(pyridoxal phosphate)lysine. The active-site Nucleophile is the Ser146.

This sequence belongs to the ACC deaminase/D-cysteine desulfhydrase family. Homodimer. It depends on pyridoxal 5'-phosphate as a cofactor. Present in seeds (at protein level).

It is found in the mitochondrion. The catalysed reaction is D-cysteine + H2O = hydrogen sulfide + pyruvate + NH4(+) + H(+). With respect to regulation, inhibited by L-cysteine (L-cys). Its function is as follows. Catalyzes the production of hydrogen sulfide (H2S) from D-cysteine (D-cys). The protein is D-cysteine desulfhydrase 1, mitochondrial of Oryza sativa subsp. japonica (Rice).